The chain runs to 213 residues: 3,4-dihydroxy-2-butanone 4-phosphate synthase (213 aa).

Residues 37–38 (RE), D42, 150–154 (RAGHT), and E174 each bind D-ribulose 5-phosphate. Mg(2+) is bound at residue E38. Residue H153 participates in Mg(2+) binding.

This sequence belongs to the DHBP synthase family. In terms of assembly, homodimer. Mg(2+) serves as cofactor. Mn(2+) is required as a cofactor.

It catalyses the reaction D-ribulose 5-phosphate = (2S)-2-hydroxy-3-oxobutyl phosphate + formate + H(+). It participates in cofactor biosynthesis; riboflavin biosynthesis; 2-hydroxy-3-oxobutyl phosphate from D-ribulose 5-phosphate: step 1/1. Catalyzes the conversion of D-ribulose 5-phosphate to formate and 3,4-dihydroxy-2-butanone 4-phosphate. In Wigglesworthia glossinidia brevipalpis, this protein is 3,4-dihydroxy-2-butanone 4-phosphate synthase.